We begin with the raw amino-acid sequence, 253 residues long: Small ribosomal subunit protein uS2 (253 aa).

It belongs to the universal ribosomal protein uS2 family.

In Cereibacter sphaeroides (strain ATCC 17023 / DSM 158 / JCM 6121 / CCUG 31486 / LMG 2827 / NBRC 12203 / NCIMB 8253 / ATH 2.4.1.) (Rhodobacter sphaeroides), this protein is Small ribosomal subunit protein uS2.